Consider the following 274-residue polypeptide: Large ribosomal subunit protein uL2 (274 aa).

The interval 223–274 (VAMNPVDHPMGGGEGKASGGHPRSRTGLYAKGKKTRNTNKYSKNYILSRKKR) is disordered.

Belongs to the universal ribosomal protein uL2 family. As to quaternary structure, part of the 50S ribosomal subunit. Forms a bridge to the 30S subunit in the 70S ribosome.

In terms of biological role, one of the primary rRNA binding proteins. Required for association of the 30S and 50S subunits to form the 70S ribosome, for tRNA binding and peptide bond formation. It has been suggested to have peptidyltransferase activity; this is somewhat controversial. Makes several contacts with the 16S rRNA in the 70S ribosome. This is Large ribosomal subunit protein uL2 from Amoebophilus asiaticus (strain 5a2).